The primary structure comprises 398 residues: GTP cyclohydrolase-2 (398 aa).

Residues 1 to 172 form a unknown region; that stretch reads MNTPTHTHPH…TAAACASTTE (172 aa). Residues 173 to 398 are GTP cyclohydrolase II; it reads YELVTRTPVP…VKPIAKTGHA (226 aa). 220 to 224 is a binding site for GTP; the sequence is RVHSS. The Zn(2+) site is built by Cys225, Cys236, and Cys238. Residues Gln241, 263–265, and Thr285 contribute to the GTP site; that span reads EGR. Asp297 acts as the Proton acceptor in catalysis. The active-site Nucleophile is the Arg299. GTP is bound by residues Ser320 and Lys325. A disordered region spans residues 375 to 398; the sequence is QRPQDPSETVDGETVKPIAKTGHA.

In the C-terminal section; belongs to the GTP cyclohydrolase II family. Requires Zn(2+) as cofactor.

It carries out the reaction GTP + 4 H2O = 2,5-diamino-6-hydroxy-4-(5-phosphoribosylamino)-pyrimidine + formate + 2 phosphate + 3 H(+). The protein operates within cofactor biosynthesis; riboflavin biosynthesis; 5-amino-6-(D-ribitylamino)uracil from GTP: step 1/4. Functionally, catalyzes the conversion of GTP to 2,5-diamino-6-ribosylamino-4(3H)-pyrimidinone 5'-phosphate (DARP), formate and pyrophosphate. The sequence is that of GTP cyclohydrolase-2 (ribA) from Xylella fastidiosa (strain Temecula1 / ATCC 700964).